We begin with the raw amino-acid sequence, 252 residues long: Tumor necrosis factor ligand superfamily member 15 (252 aa).

The Cytoplasmic segment spans residues M1 to C39. Residues L40 to M60 traverse the membrane as a helical; Signal-anchor for type II membrane protein segment. Topologically, residues A61–L252 are extracellular. The 157-residue stretch at P96–L252 folds into the THD domain. The N-linked (GlcNAc...) asparagine glycan is linked to N137. A disulfide bridge connects residues C163 and C203. N230 carries an N-linked (GlcNAc...) asparagine glycan.

This sequence belongs to the tumor necrosis factor family. Homotrimer.

The protein resides in the membrane. Its function is as follows. Receptor for TNFRSF25 and TNFRSF6B. Mediates activation of NF-kappa-B. Inhibits vascular endothelial growth and angiogenesis (in vitro). Promotes activation of caspases and apoptosis. Promotes splenocyte alloactivation. The protein is Tumor necrosis factor ligand superfamily member 15 (Tnfsf15) of Mus musculus (Mouse).